The primary structure comprises 329 residues: AUGMIN subunit 7 (329 aa).

A coiled-coil region spans residues 169-197 (DVSELETKLSEQAKILSNLQQKVDDLAAK).

Part of the augmin complex composed of 8 subunits. The complex acts on microtubules and interacts with gamma-tubulin in spindles and the phragmoplast.

Its subcellular location is the cytoplasm. The protein resides in the cytoskeleton. It localises to the spindle. The protein localises to the phragmoplast. Its function is as follows. Contributes to the assembly of the acentrosomal spindle and phragmoplast microtubule arrays as part of the augmin complex. Regulates the association of gamma-tubulin with the spindle and phragmoplast microtubules. The protein is AUGMIN subunit 7 of Arabidopsis thaliana (Mouse-ear cress).